Here is a 293-residue protein sequence, read N- to C-terminus: 4-diphosphocytidyl-2-C-methyl-D-erythritol kinase (293 aa).

Residue Lys16 is part of the active site. Position 99 to 109 (99 to 109 (PMGAGLGGGSS)) interacts with ATP. The active site involves Asp141.

Belongs to the GHMP kinase family. IspE subfamily.

It carries out the reaction 4-CDP-2-C-methyl-D-erythritol + ATP = 4-CDP-2-C-methyl-D-erythritol 2-phosphate + ADP + H(+). The protein operates within isoprenoid biosynthesis; isopentenyl diphosphate biosynthesis via DXP pathway; isopentenyl diphosphate from 1-deoxy-D-xylulose 5-phosphate: step 3/6. In terms of biological role, catalyzes the phosphorylation of the position 2 hydroxy group of 4-diphosphocytidyl-2C-methyl-D-erythritol. This is 4-diphosphocytidyl-2-C-methyl-D-erythritol kinase from Burkholderia cenocepacia (strain HI2424).